Consider the following 35-residue polypeptide: Photosystem II reaction center protein Psb30 (35 aa).

The helical transmembrane segment at 7 to 27 (VFVQLALLALIVLAGPAVILL) threads the bilayer.

This sequence belongs to the Psb30/Ycf12 family. In terms of assembly, PSII is composed of 1 copy each of membrane proteins PsbA, PsbB, PsbC, PsbD, PsbE, PsbF, PsbH, PsbI, PsbJ, PsbK, PsbL, PsbM, PsbT, PsbX, PsbY, PsbZ, Psb30/Ycf12, peripheral proteins PsbO, CyanoQ (PsbQ), PsbU, PsbV and a large number of cofactors. It forms dimeric complexes.

The protein localises to the cellular thylakoid membrane. A core subunit of photosystem II (PSII), probably helps stabilize the reaction center. The chain is Photosystem II reaction center protein Psb30 from Synechococcus sp. (strain JA-2-3B'a(2-13)) (Cyanobacteria bacterium Yellowstone B-Prime).